The chain runs to 565 residues: Proline--tRNA ligase (565 aa).

Belongs to the class-II aminoacyl-tRNA synthetase family. ProS type 1 subfamily. As to quaternary structure, homodimer.

Its subcellular location is the cytoplasm. The enzyme catalyses tRNA(Pro) + L-proline + ATP = L-prolyl-tRNA(Pro) + AMP + diphosphate. Functionally, catalyzes the attachment of proline to tRNA(Pro) in a two-step reaction: proline is first activated by ATP to form Pro-AMP and then transferred to the acceptor end of tRNA(Pro). As ProRS can inadvertently accommodate and process non-cognate amino acids such as alanine and cysteine, to avoid such errors it has two additional distinct editing activities against alanine. One activity is designated as 'pretransfer' editing and involves the tRNA(Pro)-independent hydrolysis of activated Ala-AMP. The other activity is designated 'posttransfer' editing and involves deacylation of mischarged Ala-tRNA(Pro). The misacylated Cys-tRNA(Pro) is not edited by ProRS. The protein is Proline--tRNA ligase of Lactobacillus gasseri (strain ATCC 33323 / DSM 20243 / BCRC 14619 / CIP 102991 / JCM 1131 / KCTC 3163 / NCIMB 11718 / NCTC 13722 / AM63).